The sequence spans 185 residues: Ribosome-recycling factor (185 aa).

The tract at residues 135-159 (ANDKLKASEKNKEASEDEVKRAQEK) is disordered.

The protein belongs to the RRF family.

The protein resides in the cytoplasm. Functionally, responsible for the release of ribosomes from messenger RNA at the termination of protein biosynthesis. May increase the efficiency of translation by recycling ribosomes from one round of translation to another. This is Ribosome-recycling factor from Moorella thermoacetica (strain ATCC 39073 / JCM 9320).